The primary structure comprises 1192 residues: DNA topoisomerase 2 (1192 aa).

ATP is bound by residues Asn-64, Asn-95, and 142 to 149 (GTNGVGLK). Residues Glu-438, Asp-539, and Asp-541 each coordinate Mg(2+). The Topo IIA-type catalytic domain occupies 707–1174 (IPNFLDGMTR…PGASVWLEEI (468 aa)). Tyr-800 (O-(5'-phospho-DNA)-tyrosine intermediate) is an active-site residue.

The protein belongs to the type II topoisomerase family. Mg(2+) serves as cofactor. The cofactor is Mn(2+). Ca(2+) is required as a cofactor.

It is found in the host cytoplasm. The catalysed reaction is ATP-dependent breakage, passage and rejoining of double-stranded DNA.. Its function is as follows. Type II topoisomerase. Processively relaxes supercoiled DNA. Displays DNA-supercoiling activity only when associated with the viral histone-like protein. The chain is DNA topoisomerase 2 (TOP) from African swine fever virus (strain Badajoz 1971 Vero-adapted) (Ba71V).